Consider the following 273-residue polypeptide: MGKLLRKPLNERIAPGITFVQDINQANSPLSYVGFRLIEMEKGAIYQEELTDLECCIVALTGKITVSEGDNIFAEIGTRANVFEKIPTDSVFISGGRTFQVKADTEKARVALCYSQANRDLPTTLIKASDNSIEQRGKYQNKRLVHNILPDVSEVASSLLVVEVYTDGGNFSSYPPHKHDRDNLPAESLLEESYYHEINPEQGFIFQRVYTDDRTLDETMAVEHQNAVIVPEGYHPVGVPDGYDSYYLNVMAGPKRVWKFHNDPDHEWILERD.

This sequence belongs to the isomerase IolB family.

It catalyses the reaction 5-deoxy-D-glucuronate = 5-dehydro-2-deoxy-D-gluconate. It functions in the pathway polyol metabolism; myo-inositol degradation into acetyl-CoA; acetyl-CoA from myo-inositol: step 4/7. Involved in the isomerization of 5-deoxy-glucuronate (5DG) to 5-dehydro-2-deoxy-D-gluconate (DKG or 2-deoxy-5-keto-D-gluconate). This Listeria monocytogenes serotype 4b (strain CLIP80459) protein is 5-deoxy-glucuronate isomerase.